A 400-amino-acid chain; its full sequence is Zinc finger CCHC domain-containing protein 3 (400 aa).

A disordered region spans residues 1–157 (MATGGGAEEE…LQDEPPAAGP (157 aa)). 2 stretches are compositionally biased toward basic and acidic residues: residues 26-38 (ARVEEPEGVREKM) and 47-63 (LAEKKGDFREPRRRDET). Residues 66–75 (GASGGLGSPG) are compositionally biased toward gly residues. Positions 91 to 109 (GDPKGRRRDPTGEASDAYR) are enriched in basic and acidic residues. Tyrosine 198 carries the post-translational modification Phosphotyrosine. 2 consecutive CCHC-type zinc fingers follow at residues 349 to 365 (RCFRCGEEGHLSPYCRK) and 369 to 384 (CNLCGKRGHAFAQCPK).

Interacts with CGAS. Interacts with RIGI. Interacts with IFIH1/MDA5.

It is found in the cytoplasm. Nucleic acid-binding protein involved in innate immune response to DNA and RNA viruses. Binds DNA and RNA in the cytoplasm and acts by promoting recognition of viral nucleic acids by virus sensors, such as RIGI, IFIH1/MDA5 and CGAS. Acts as a co-sensor for recognition of double-stranded DNA (dsDNA) by cGAS in the cytoplasm, thereby playing a role in innate immune response to cytosolic dsDNA and DNA virus. Binds dsDNA and probably acts by promoting sensing of dsDNA by CGAS, leading to enhance CGAS oligomerization and activation. Promotes sensing of viral RNA by RIG-I-like receptors proteins RIGI and IFIH1/MDA5 via two mechanisms: binds double-stranded RNA (dsRNA), enhancing the binding of RIGI and IFIH1/MDA5 to dsRNA and promotes 'Lys-63'-linked ubiquitination and subsequent activation of RIGI and IFIH1/MDA5. In Mus musculus (Mouse), this protein is Zinc finger CCHC domain-containing protein 3.